A 333-amino-acid polypeptide reads, in one-letter code: Homeobox protein Hox-A1 (333 aa).

Residues 61-82 (ITSPHHHHHHHHHPQPATYQTS) form a disordered region. Residues 64–74 (PHHHHHHHHHP) show a composition bias toward basic residues. Residues 74–202 (PQPATYQTSG…PASETSSPAQ (129 aa)) are interaction with OGT. Thr152 carries O-linked (GlcNAc) threonine glycosylation. Positions 203-208 (TFDWMK) match the Antp-type hexapeptide motif. A DNA-binding region (homeobox) is located at residues 227–286 (QPNAVRTNFTTKQLTELEKEFHFNKYLTRARSEIAASLQLNETQVKIWFQNRRMKQKKRE). The segment at 279-333 (RMKQKKREKEGLLPMSPATPPGSDEKTEESSEKSSSSPSAPSPASSTSDTLTTSH) is disordered. Basic and acidic residues predominate over residues 301 to 310 (SDEKTEESSE). Low complexity predominate over residues 311–333 (KSSSSPSAPSPASSTSDTLTTSH).

This sequence belongs to the Antp homeobox family. Labial subfamily. Interacts with OGT (via TPR repeats domain); the interaction takes place mainly in the nucleus. Forms a DNA-binding heterodimer with transcription factor PBX1. Post-translationally, glycosylated by OGT.

The protein localises to the nucleus. Sequence-specific transcription factor. Regulates multiple developmental processes including brainstem, inner and outer ear, abducens nerve and cardiovascular development and morphogenesis as well as cognition and behavior. Also part of a developmental regulatory system that provides cells with specific positional identities on the anterior-posterior axis. Acts on the anterior body structures. Seems to act in the maintenance and/or generation of hindbrain segments. Activates transcription in the presence of PBX1A and PKNOX1. In Rattus norvegicus (Rat), this protein is Homeobox protein Hox-A1 (Hoxa1).